We begin with the raw amino-acid sequence, 737 residues long: Dipeptidyl peptidase 3 (737 aa).

At alanine 2 the chain carries N-acetylalanine. Histidine 450 lines the Zn(2+) pocket. Residue glutamate 451 is part of the active site. Zn(2+)-binding residues include histidine 455 and glutamate 508.

Belongs to the peptidase M49 family. Zn(2+) serves as cofactor. Detected in placenta (at protein level). Detected in erythrocytes (at protein level).

It is found in the cytoplasm. The protein localises to the cytosol. The catalysed reaction is Release of an N-terminal dipeptide from a peptide comprising four or more residues, with broad specificity. Also acts on dipeptidyl 2-naphthylamides.. Activated by Co(2+). Inhibited by EDTA and o-phenanthroline (in vitro). In terms of biological role, cleaves and degrades bioactive peptides, including angiotensin, Leu-enkephalin and Met-enkephalin. Also cleaves Arg-Arg-beta-naphthylamide (in vitro). The chain is Dipeptidyl peptidase 3 (DPP3) from Homo sapiens (Human).